Consider the following 496-residue polypeptide: RNA-binding motif protein, Y chromosome, family 1 member B (496 aa).

The RRM domain maps to 8–85; sequence GKLFIGGLNR…KAIKVEQAKK (78 aa). Disordered regions lie at residues 67–349 and 452–496; these read DMNG…HRDY and KDQR…SSRY. Low complexity-rich tracts occupy residues 97-114 and 149-159; these read PASSRNRSPSGSLRSARG and PVKRGPSSRSG. Polar residues predominate over residues 175–184; the sequence is NSWMGSQGPM. Composition is skewed to basic and acidic residues over residues 204 to 214, 242 to 253, 276 to 289, 313 to 326, 335 to 349, and 484 to 496; these read RNDRMSTRHDG, DNGHSNRDEHSS, AYRDYGHSRRDESY, GYRDYGHSRRHESY, SSRETRDYAPPHRDY, and GESRSEKGDSSRY.

Interacts with splicing factor proteins SFRS3/SRP20, TRA2B/SFRS10, KHDRBS1/SAM68 and KHDRBS3. As to expression, testis-specific.

It localises to the nucleus. RNA-binding protein which may be involved in spermatogenesis. Required for sperm development, possibly by participating in pre-mRNA splicing in the testis. The sequence is that of RNA-binding motif protein, Y chromosome, family 1 member B (RBMY1B) from Homo sapiens (Human).